A 174-amino-acid chain; its full sequence is Probable adenylyl-sulfate kinase (174 aa).

Residue glycine 10–threonine 17 coordinates ATP. Serine 84 serves as the catalytic Phosphoserine intermediate.

Belongs to the APS kinase family.

It carries out the reaction adenosine 5'-phosphosulfate + ATP = 3'-phosphoadenylyl sulfate + ADP + H(+). It functions in the pathway sulfur metabolism; hydrogen sulfide biosynthesis; sulfite from sulfate: step 2/3. In terms of biological role, catalyzes the synthesis of activated sulfate. In Pyrococcus abyssi (strain GE5 / Orsay), this protein is Probable adenylyl-sulfate kinase (cysC).